We begin with the raw amino-acid sequence, 320 residues long: MAGLAARLVLLAGAAALASGSQGDREPVYRDCVLQCEEQNCSGGALNHFRSRQPIYMSLAGWTCRDDCKYECMWVTVGLYLQEGHKVPQFHGKWPFSRFLFFQEPASAVASFLNGLASLVMLCRYRTFVPASSPMYHTCVAFAWVSLNAWFWSTVFHTRDTDLTEKMDYFCASTVILHSIYLCCVRTVGLQHPAVVSAFRALLLLMLTVHVSYLSLIRFDYGYNLVANVAIGLVNVVWWLAWCLWNQRRLPHVRKCVVVVLLLQGLSLLELLDFPPLFWVLDAHAIWHISTIPVHVLFFSFLEDDSLYLLKESEDKFKLD.

Residues 1 to 20 (MAGLAARLVLLAGAAALASG) form the signal peptide. The Lumenal portion of the chain corresponds to 21 to 98 (SQGDREPVYR…QFHGKWPFSR (78 aa)). N-linked (GlcNAc...) asparagine glycosylation is present at asparagine 40. A helical membrane pass occupies residues 99-119 (FLFFQEPASAVASFLNGLASL). Residues 120-135 (VMLCRYRTFVPASSPM) lie on the Cytoplasmic side of the membrane. A helical transmembrane segment spans residues 136–156 (YHTCVAFAWVSLNAWFWSTVF). At 157-169 (HTRDTDLTEKMDY) the chain is on the lumenal side. A helical transmembrane segment spans residues 170 to 190 (FCASTVILHSIYLCCVRTVGL). The Cytoplasmic segment spans residues 191-193 (QHP). Residues 194–214 (AVVSAFRALLLLMLTVHVSYL) form a helical membrane-spanning segment. The Lumenal portion of the chain corresponds to 215 to 224 (SLIRFDYGYN). A helical transmembrane segment spans residues 225–245 (LVANVAIGLVNVVWWLAWCLW). Residues 246 to 257 (NQRRLPHVRKCV) lie on the Cytoplasmic side of the membrane. Residues 258–278 (VVVLLLQGLSLLELLDFPPLF) traverse the membrane as a helical segment. Residue tryptophan 279 is a topological domain, lumenal. Residues 280–299 (VLDAHAIWHISTIPVHVLFF) form a helical membrane-spanning segment. At 300–320 (SFLEDDSLYLLKESEDKFKLD) the chain is on the cytoplasmic side.

It belongs to the PGAP3 family. Ubiquitously expressed, with highest levels in thyroid and placenta.

The protein resides in the golgi apparatus membrane. In terms of biological role, involved in the fatty acid remodeling steps of GPI-anchor maturation where the unsaturated acyl chain at sn-2 of inositol phosphate is replaced by a saturated stearoyl chain. May catalyze the first step of the fatty acid remodeling, by removing the unsaturated acyl chain at sn-2 of inositol phosphate, generating a lyso-GPI intermediate. The fatty acid remodeling steps is critical for the integration of GPI-APs into lipid rafts. The polypeptide is GPI-specific phospholipase A2-like PGAP3 (Homo sapiens (Human)).